Consider the following 375-residue polypeptide: Growth/differentiation factor 8 (375 aa).

The first 18 residues, 1–18 (MQRLQICVYIYLFVLIVA), serve as a signal peptide directing secretion. A propeptide spanning residues 19–266 (GPVDLSENSE…VTDTPKRSRR (248 aa)) is cleaved from the precursor. N-linked (GlcNAc...) asparagine glycosylation is present at N71. Intrachain disulfides connect C281–C340, C309–C372, and C313–C374.

It belongs to the TGF-beta family. Homodimer; disulfide-linked. Interacts with WFIKKN2, leading to inhibit its activity. Interacts with FSTL3. In terms of processing, synthesized as large precursor molecule that undergoes proteolytic cleavage to generate an N-terminal propeptide and a disulfide linked C-terminal dimer, which is the biologically active molecule. The circulating form consists of a latent complex of the C-terminal dimer and other proteins, including its propeptide, which maintain the C-terminal dimer in a latent, inactive state. Ligand activation requires additional cleavage of the prodomain by a tolloid-like metalloproteinase.

It is found in the secreted. In terms of biological role, acts specifically as a negative regulator of skeletal muscle growth. The sequence is that of Growth/differentiation factor 8 (MSTN) from Vulpes vulpes (Red fox).